Here is a 415-residue protein sequence, read N- to C-terminus: Serine hydroxymethyltransferase (415 aa).

Residues Leu-121 and 125–127 (GHL) contribute to the (6S)-5,6,7,8-tetrahydrofolate site. At Lys-229 the chain carries N6-(pyridoxal phosphate)lysine.

The protein belongs to the SHMT family. As to quaternary structure, homodimer. Pyridoxal 5'-phosphate is required as a cofactor.

It localises to the cytoplasm. The catalysed reaction is (6R)-5,10-methylene-5,6,7,8-tetrahydrofolate + glycine + H2O = (6S)-5,6,7,8-tetrahydrofolate + L-serine. The protein operates within one-carbon metabolism; tetrahydrofolate interconversion. Its pathway is amino-acid biosynthesis; glycine biosynthesis; glycine from L-serine: step 1/1. In terms of biological role, catalyzes the reversible interconversion of serine and glycine with tetrahydrofolate (THF) serving as the one-carbon carrier. This reaction serves as the major source of one-carbon groups required for the biosynthesis of purines, thymidylate, methionine, and other important biomolecules. Also exhibits THF-independent aldolase activity toward beta-hydroxyamino acids, producing glycine and aldehydes, via a retro-aldol mechanism. In Bordetella petrii (strain ATCC BAA-461 / DSM 12804 / CCUG 43448), this protein is Serine hydroxymethyltransferase.